A 296-amino-acid chain; its full sequence is MELRHLRYFVAVAQALNFTRAAEKLHTSQPSLSSQIRDLENCVGVPLLVRDKRKVALTAAGECFLQDALAILEQAENAKLRARKIVQEDRQLTIGFVPSAEVNLLPKVLPMFRLRQPDTLIELVSLITTQQEEKIRRGELDVGLMRHPVYSPEIDYLELFDEPLVVVLPVDHPLAHEKEITAAQLDGVNFVSTDPVYSGSLAPIVKAWFAQENSQPNIVQVATNILVTMNLVGMGLGVTLIPGYMNNFNTGQVVFRPIAGNVPSIALLMAWKKGEMKPALRDFIAIVQERLASVTA.

The HTH lysR-type domain maps to 1-58 (MELRHLRYFVAVAQALNFTRAAEKLHTSQPSLSSQIRDLENCVGVPLLVRDKRKVALT). The H-T-H motif DNA-binding region spans 18 to 38 (FTRAAEKLHTSQPSLSSQIRD).

It belongs to the LysR transcriptional regulatory family.

In terms of biological role, transcriptional activator of the hca operon for 3-phenylpropionic acid catabolism. This is Hca operon transcriptional activator HcaR (hcaR) from Escherichia coli (strain K12).